The chain runs to 801 residues: Squamosa promoter-binding-like protein 7 (801 aa).

2 disordered regions span residues 1 to 23 (MSSL…LVND) and 59 to 91 (SPPL…DRVR). An SBP-type; atypical zinc finger spans residues 135 to 212 (VARCQVPDCE…ERHNNRRKRK (78 aa)). Zn(2+)-binding residues include cysteine 138, cysteine 143, cysteine 160, cysteine 163, cysteine 179, cysteine 182, histidine 186, and cysteine 198. The short motif at 195-211 (KRSCRRKLERHNNRRKR) is the Bipartite nuclear localization signal element. Over residues 203 to 213 (ERHNNRRKRKP) the composition is skewed to basic residues. Disordered regions lie at residues 203–258 (ERHN…PSLI) and 286–313 (GSGE…NKSA). Polar residues predominate over residues 222–233 (EQQQVLSQNDNS). A compositionally biased stretch (basic and acidic residues) spans 249–258 (QRAEEEPSLI). Residues 304-313 (SPSNGDNKSA) are compositionally biased toward polar residues.

Homodimer. Interacts with KIN17. Interacts with HY5. Zn(2+) is required as a cofactor. As to expression, expressed in roots rosette leaves, cauline leaves, stems, flowers and siliques.

It localises to the nucleus speckle. Functionally, transcription factor that participates in reprogramming global gene expression during copper deficiency in order to improve the metal uptake and prioritize its distribution to copper proteins of major importance. Binds directly to 5'-GTAC-3' motifs in the microRNA (miRNA) promoter of the stress-responsive miRNAs miR398b and miR398c to activate their transcription. During copper deficiency, activates the copper transporters COPT1 and COPT2, and the copper chaperone CCH, directly or indirectly via miRNAs. Required for the expression of the miRNAs miR397, miR408 and miR857. Acts coordinately with HY5 to regulate miR408 and its target genes in response to changes in light and copper conditions. Activates miR857 and its target genes in response to low copper conditions. Involved in cadmium stress response by regulating miR397a, miR398b, miR398c and miR857. Required for iron homeostasis during copper deficiency. The protein is Squamosa promoter-binding-like protein 7 (SPL7) of Arabidopsis thaliana (Mouse-ear cress).